Here is a 140-residue protein sequence, read N- to C-terminus: Arsenate reductase ArsI2 (140 aa).

The active-site Nucleophile; cysteine thioarsenate intermediate is Cys10.

This sequence belongs to the ArsC family.

It catalyses the reaction [glutaredoxin]-dithiol + arsenate + glutathione + H(+) = glutathionyl-S-S-[glutaredoxin] + arsenite + H2O. Its function is as follows. Catalyzes the reduction of arsenate [As(V)] to arsenite [As(III)]. Does not constitute the major arsenate reductase in cells: essential only in the absence of ArsC (AC P74313). This chain is Arsenate reductase ArsI2, found in Synechocystis sp. (strain ATCC 27184 / PCC 6803 / Kazusa).